A 396-amino-acid chain; its full sequence is L-lactate dehydrogenase (396 aa).

Residues 1–380 form the FMN hydroxy acid dehydrogenase domain; the sequence is MIISAASDYR…SGDSLVQELG (380 aa). Residue Y24 participates in substrate binding. 2 residues coordinate FMN: S106 and Q127. Y129 lines the substrate pocket. T155 lines the FMN pocket. R164 contributes to the substrate binding site. K251 lines the FMN pocket. The active-site Proton acceptor is H275. R278 contacts substrate. 306 to 330 is a binding site for FMN; the sequence is DSGIRNGLDVVRMIALGADTVLLGR.

This sequence belongs to the FMN-dependent alpha-hydroxy acid dehydrogenase family. FMN is required as a cofactor.

It localises to the cell inner membrane. It catalyses the reaction (S)-lactate + A = pyruvate + AH2. Its function is as follows. Catalyzes the conversion of L-lactate to pyruvate. Is coupled to the respiratory chain. This is L-lactate dehydrogenase from Salmonella paratyphi A (strain ATCC 9150 / SARB42).